Consider the following 175-residue polypeptide: Adenine phosphoribosyltransferase (175 aa).

The protein belongs to the purine/pyrimidine phosphoribosyltransferase family. As to quaternary structure, homodimer.

The protein resides in the cytoplasm. It catalyses the reaction AMP + diphosphate = 5-phospho-alpha-D-ribose 1-diphosphate + adenine. It functions in the pathway purine metabolism; AMP biosynthesis via salvage pathway; AMP from adenine: step 1/1. In terms of biological role, catalyzes a salvage reaction resulting in the formation of AMP, that is energically less costly than de novo synthesis. The sequence is that of Adenine phosphoribosyltransferase from Francisella tularensis subsp. tularensis (strain WY96-3418).